The primary structure comprises 981 residues: MVHHSGSIQSFKQQKGMNISKSEITKETSLKPSRRSLPCLAQSYAYSKSLSQSTSLFQSTESESQAPTSITLISTDKAEQVNTEENKNDSVLRCSFADLSDFCLALGKDKDYTDESEHATYDRSRLINDFVIKDKSEFKTKLSKNDMNYIASSGPLFKDGKKRIDYILVYRKTNIQYDKRNTFEKNLRAEGLMLEKEPAIASPDIMFIKIHIPWDTLCKYAERLNIRMPFRKKCYYTDGRSKSMGRMQTYFRRIKNWMAQNPMVLDKSAFPDLEESDCYTGPFSRARIHHFIINNKDTFFSNATRSRIVYHMLERTKYENGISKVGIRKLINNGSYIAAFPPHEGAYKSSQPIKTHGPQNNRHLLYERWARWGMWYKHQPLDLIRLYFGEKIGLYFAWLGWYTGMLIPAAIVGLCVFFYGLFTMNNSQVSQEICKATEVFMCPLCDKNCSLQRLNDSCIYAKVTYLFDNGGTVFFAIFMAIWATVFLEFWKRRRSILTYTWDLIEWEEEEETLRPQFEAKYYKMEIVNPITGKPEPHQPSSDKVTRLLVSVSGIFFMISLVITAVFGVVVYRLVVMEQFASFKWNFIKQYWQFATSAAAVCINFIIIMLLNLAYEKIAYLLTNLEYPRTESEWENSFALKMFLFQFVNLNSSIFYIAFFLGRFVGHPGKYNKLFDRWRLEECHPSGCLIDLCLQMGVIMFLKQIWNNFMELGYPLIQNWWSRHKIKRGIHDASIPQWENDWNLQPMNLHGLMDEYLEMVLQFGFTTIFVAAFPLAPLLALLNNIIEIRLDAYKFVTQWRRPLPARATDIGIWLGILEGIGILAVITNAFVIAITSDYIPRFVYEYKYGPCANHVEPSENCLKGYVNNSLSFFDLSELGMGKSGYCRYRDYRGPPWSSKPYEFTLQYWHILAARLAFIIVFEHLVFGIKSFIAYLIPDVPKGLHDRIRREKYLVQEMMYEAELEHLQQQRRKSGQPVHHEWP.

The segment covering 1-22 (MVHHSGSIQSFKQQKGMNISKS) has biased composition (polar residues). Residues 1–33 (MVHHSGSIQSFKQQKGMNISKSEITKETSLKPS) form a disordered region. Residues 1–403 (MVHHSGSIQS…LYFAWLGWYT (403 aa)) lie on the Cytoplasmic side of the membrane. Residues 404–424 (GMLIPAAIVGLCVFFYGLFTM) form a helical membrane-spanning segment. Residues Asn-425, Asn-448, and Asn-455 are each glycosylated (N-linked (GlcNAc...) asparagine). Residues 425–469 (NNSQVSQEICKATEVFMCPLCDKNCSLQRLNDSCIYAKVTYLFDN) lie on the Extracellular side of the membrane. A helical membrane pass occupies residues 470–490 (GGTVFFAIFMAIWATVFLEFW). Residues 491-550 (KRRRSILTYTWDLIEWEEEEETLRPQFEAKYYKMEIVNPITGKPEPHQPSSDKVTRLLVS) are Cytoplasmic-facing. A helical transmembrane segment spans residues 551–571 (VSGIFFMISLVITAVFGVVVY). Residues 572-592 (RLVVMEQFASFKWNFIKQYWQ) are Extracellular-facing. The chain crosses the membrane as a helical span at residues 593–613 (FATSAAAVCINFIIIMLLNLA). Over 614–640 (YEKIAYLLTNLEYPRTESEWENSFALK) the chain is Cytoplasmic. Residues 641-661 (MFLFQFVNLNSSIFYIAFFLG) form a helical membrane-spanning segment. The Extracellular portion of the chain corresponds to 662-761 (RFVGHPGKYN…MDEYLEMVLQ (100 aa)). A helical membrane pass occupies residues 762–782 (FGFTTIFVAAFPLAPLLALLN). The Cytoplasmic portion of the chain corresponds to 783–810 (NIIEIRLDAYKFVTQWRRPLPARATDIG). Residues 811–831 (IWLGILEGIGILAVITNAFVI) traverse the membrane as a helical segment. The Extracellular portion of the chain corresponds to 832–914 (AITSDYIPRF…QYWHILAARL (83 aa)). N-linked (GlcNAc...) asparagine glycosylation is present at Asn-866. The chain crosses the membrane as a helical span at residues 915-935 (AFIIVFEHLVFGIKSFIAYLI). Residues 936–981 (PDVPKGLHDRIRREKYLVQEMMYEAELEHLQQQRRKSGQPVHHEWP) are Cytoplasmic-facing.

The protein belongs to the anoctamin family. In terms of assembly, interacts with KCNT1/Slack. In terms of tissue distribution, highly expressed in the forebrain striatum.

The protein localises to the cell membrane. It catalyses the reaction a 1,2-diacyl-sn-glycero-3-phosphocholine(in) = a 1,2-diacyl-sn-glycero-3-phosphocholine(out). It carries out the reaction a beta-D-galactosyl-(1&lt;-&gt;1')-N-acylsphing-4-enine(out) = a beta-D-galactosyl-(1&lt;-&gt;1')-N-acylsphing-4-enine(in). Has calcium-dependent phospholipid scramblase activity; scrambles phosphatidylcholine and galactosylceramide. Seems to act as potassium channel regulator and may inhibit pain signaling; can facilitate KCNT1/Slack channel activity by promoting its full single-channel conductance at very low sodium concentrations and by increasing its sodium sensitivity. Does not exhibit calcium-activated chloride channel (CaCC) activity. This is Anoctamin-3 (ANO3) from Homo sapiens (Human).